Reading from the N-terminus, the 817-residue chain is B lymphocyte-induced maturation protein 1 homolog (817 aa).

Residues 1–62 (MGQGSGDDGV…PAGVSASGAR (62 aa)) form a disordered region. The span at 15 to 61 (FSSAAAAAHSPPHSPLSVGVSSASSATSSSSTPPSSTSPAGVSASGA) shows a compositional bias: low complexity. The SET domain occupies 103 to 241 (MNLILKSSSK…ANTELSFWFS (139 aa)). 4 C2H2-type zinc fingers span residues 508-530 (YACKDCNKTFGQLSNLKVHVRTH), 536-558 (FKCEICTKEFTQLAHLQKHHLVH), 564-586 (HRCDICDKRFSSTSNLKTHLRLH), and 592-614 (YTCDVCDAKFTQYVHLRLHKRLH). Residues 620 to 642 (YSCGTCGKKYISPSGLRTHWKTT) form a C2H2-type 5; degenerate zinc finger. A disordered region spans residues 709–817 (LLGQGPSGMQ…LPSLGLPHYP (109 aa)). The segment covering 779-794 (QGGPSSGSGQQQHPQH) has biased composition (low complexity).

As to quaternary structure, interacts with dre-1; the interaction targets blmp-1 for proteasomal degradation. Interacts with ldb-1 and ham-3. In terms of processing, ubiquitinated by the SCF(dre-1) complex, leading to its degradation by the proteasome. As to expression, expressed in hypodermal, vulval, intestinal and distal tip cells.

The protein localises to the nucleus. It localises to the cytoplasm. Functionally, transcription factor which binds to enhancer elements in the promoter region of genes. Regulates the expression of the transcription factor bed-3 to control vulval development. Promotes terminal differentiation in the hypodermis and is involved in regulation of gonadal outgrowth and entry into the dauer stage. Regulates the timing of dorsalward migration of the distal tip cells of the hermaphrodite gonad by inhibiting precocious unc-5 and lin-29 expression which in turn prevents early dorsalward turning. Plays a role in male tail tip morphogenesis. The chain is B lymphocyte-induced maturation protein 1 homolog from Caenorhabditis elegans.